A 137-amino-acid chain; its full sequence is Large ribosomal subunit protein bL12 (137 aa).

The protein belongs to the bacterial ribosomal protein bL12 family. Homodimer. Part of the ribosomal stalk of the 50S ribosomal subunit. Forms a multimeric L10(L12)X complex, where L10 forms an elongated spine to which 2 to 4 L12 dimers bind in a sequential fashion. Binds GTP-bound translation factors.

In terms of biological role, forms part of the ribosomal stalk which helps the ribosome interact with GTP-bound translation factors. Is thus essential for accurate translation. The polypeptide is Large ribosomal subunit protein bL12 (Gloeobacter violaceus (strain ATCC 29082 / PCC 7421)).